The primary structure comprises 674 residues: ATP-dependent DNA helicase Hel308 (674 aa).

Residues Gln-27 and 44 to 51 each bind ATP; that span reads VPTAAGKT. The region spanning 31–197 is the Helicase ATP-binding domain; sequence IEQIRKGRNV…WLDASLIKSD (167 aa). The DEAH box motif lies at 142-145; the sequence is DEIH. The Helicase C-terminal domain maps to 224–411; the sequence is SINQIIRETV…EAKVRFNTLA (188 aa).

It belongs to the helicase family. Hel308 subfamily. Monomer.

The enzyme catalyses Couples ATP hydrolysis with the unwinding of duplex DNA by translocating in the 3'-5' direction.. The catalysed reaction is ATP + H2O = ADP + phosphate + H(+). Its function is as follows. DNA-dependent ATPase and 3'-5' DNA helicase that may be involved in repair of stalled replication forks. This chain is ATP-dependent DNA helicase Hel308, found in Thermoplasma acidophilum (strain ATCC 25905 / DSM 1728 / JCM 9062 / NBRC 15155 / AMRC-C165).